Here is a 357-residue protein sequence, read N- to C-terminus: Protein RecA (357 aa).

67 to 74 (GPESSGKT) contributes to the ATP binding site. Positions 335-357 (LASSASDDESTEGNIDLETGEIF) are disordered.

Belongs to the RecA family.

The protein resides in the cytoplasm. Functionally, can catalyze the hydrolysis of ATP in the presence of single-stranded DNA, the ATP-dependent uptake of single-stranded DNA by duplex DNA, and the ATP-dependent hybridization of homologous single-stranded DNAs. It interacts with LexA causing its activation and leading to its autocatalytic cleavage. The chain is Protein RecA from Shewanella putrefaciens (strain CN-32 / ATCC BAA-453).